Here is a 265-residue protein sequence, read N- to C-terminus: MQPDLHCRTLAAHTLKHFRALSPLTHCMTNDVVQTFTANTLLALGASPAMVIDPVEARPFAAIANALLINVGTLTASRADAMRAAVESAYDAKTPWTLDPVAVGALEFRRRFCLDLLSLRPAAIRGNASEILALSGMALGGRGVDTTEAALAALPAAQALARQIDCIVVVTGEVDYVTNGQRTLSIPGGDPLMTRIVGTGCALSAVVAASCALPGAALDNVASACCWMKLAGQAAAERSEGPGSFIPAFLDALYHLDVEAANATN.

M50 serves as a coordination point for substrate. Residues R125 and T171 each contribute to the ATP site. G198 serves as a coordination point for substrate.

The protein belongs to the Thz kinase family. The cofactor is Mg(2+).

It catalyses the reaction 5-(2-hydroxyethyl)-4-methylthiazole + ATP = 4-methyl-5-(2-phosphooxyethyl)-thiazole + ADP + H(+). It participates in cofactor biosynthesis; thiamine diphosphate biosynthesis; 4-methyl-5-(2-phosphoethyl)-thiazole from 5-(2-hydroxyethyl)-4-methylthiazole: step 1/1. Catalyzes the phosphorylation of the hydroxyl group of 4-methyl-5-beta-hydroxyethylthiazole (THZ). The sequence is that of Hydroxyethylthiazole kinase from Salmonella newport (strain SL254).